A 443-amino-acid polypeptide reads, in one-letter code: D-serine dehydratase (443 aa).

N6-(pyridoxal phosphate)lysine is present on Lys-118.

It belongs to the serine/threonine dehydratase family. DsdA subfamily. In terms of assembly, monomer. Requires pyridoxal 5'-phosphate as cofactor.

The enzyme catalyses D-serine = pyruvate + NH4(+). This is D-serine dehydratase from Photorhabdus laumondii subsp. laumondii (strain DSM 15139 / CIP 105565 / TT01) (Photorhabdus luminescens subsp. laumondii).